The following is a 282-amino-acid chain: Bifunctional protein FolD (282 aa).

NADP(+) is bound by residues 160-162 (NRS), Ser185, and Ile228.

This sequence belongs to the tetrahydrofolate dehydrogenase/cyclohydrolase family. In terms of assembly, homodimer.

The enzyme catalyses (6R)-5,10-methylene-5,6,7,8-tetrahydrofolate + NADP(+) = (6R)-5,10-methenyltetrahydrofolate + NADPH. It catalyses the reaction (6R)-5,10-methenyltetrahydrofolate + H2O = (6R)-10-formyltetrahydrofolate + H(+). It functions in the pathway one-carbon metabolism; tetrahydrofolate interconversion. Catalyzes the oxidation of 5,10-methylenetetrahydrofolate to 5,10-methenyltetrahydrofolate and then the hydrolysis of 5,10-methenyltetrahydrofolate to 10-formyltetrahydrofolate. This Cenarchaeum symbiosum (strain A) protein is Bifunctional protein FolD.